We begin with the raw amino-acid sequence, 190 residues long: Xanthine phosphoribosyltransferase (190 aa).

Leucine 20 and asparagine 27 together coordinate xanthine. 128–132 (ANGKA) is a 5-phospho-alpha-D-ribose 1-diphosphate binding site. Xanthine is bound at residue lysine 156.

This sequence belongs to the purine/pyrimidine phosphoribosyltransferase family. Xpt subfamily. Homodimer.

It localises to the cytoplasm. The catalysed reaction is XMP + diphosphate = xanthine + 5-phospho-alpha-D-ribose 1-diphosphate. It functions in the pathway purine metabolism; XMP biosynthesis via salvage pathway; XMP from xanthine: step 1/1. Its function is as follows. Converts the preformed base xanthine, a product of nucleic acid breakdown, to xanthosine 5'-monophosphate (XMP), so it can be reused for RNA or DNA synthesis. The protein is Xanthine phosphoribosyltransferase of Pseudomonas fluorescens (strain Pf0-1).